Here is a 338-residue protein sequence, read N- to C-terminus: 4-hydroxy-2-oxovalerate aldolase (338 aa).

A Pyruvate carboxyltransferase domain is found at 6–256; it reads IHIVDTTLRD…RTGVDFYKVM (251 aa). Substrate is bound at residue 14–15; that stretch reads RD. Aspartate 15 lines the Mn(2+) pocket. Histidine 18 (proton acceptor) is an active-site residue. Residues serine 168 and histidine 195 each coordinate substrate. Histidine 195 and histidine 197 together coordinate Mn(2+). Tyrosine 286 contributes to the substrate binding site.

Belongs to the 4-hydroxy-2-oxovalerate aldolase family.

The catalysed reaction is (S)-4-hydroxy-2-oxopentanoate = acetaldehyde + pyruvate. In Moorella thermoacetica (strain ATCC 39073 / JCM 9320), this protein is 4-hydroxy-2-oxovalerate aldolase.